Here is a 68-residue protein sequence, read N- to C-terminus: Venom-like beta-defensin (68 aa).

A signal peptide spans 1 to 24; it reads MRLLILFLAVVTLLSLAGPGSAEV. Intrachain disulfides connect cysteine 33–cysteine 60, cysteine 40–cysteine 54, and cysteine 47–cysteine 61.

As to expression, highly expressed in intestine, liver and spleen and expressed at lower levels in brain, kidney, lung, testis and venom gland.

The protein localises to the secreted. Functionally, potent antimicrobial peptide that displays activity against S.aureus and P.aeruginosa. Does not inhibit growth of E.coli. The polypeptide is Venom-like beta-defensin (Ornithorhynchus anatinus (Duckbill platypus)).